The following is a 119-amino-acid chain: Basic phospholipase A2 DE-1 (119 aa).

7 cysteine pairs are disulfide-bonded: Cys11-Cys71, Cys26-Cys118, Cys28-Cys44, Cys43-Cys99, Cys50-Cys92, Cys60-Cys85, and Cys78-Cys90. The Ca(2+) site is built by Tyr27, Gly29, Gly31, and Asp48. Asp93 is an active-site residue.

It belongs to the phospholipase A2 family. Group I subfamily. D49 sub-subfamily. Ca(2+) is required as a cofactor. As to expression, expressed by the venom gland.

The protein localises to the secreted. The enzyme catalyses a 1,2-diacyl-sn-glycero-3-phosphocholine + H2O = a 1-acyl-sn-glycero-3-phosphocholine + a fatty acid + H(+). Functionally, PLA2 catalyzes the calcium-dependent hydrolysis of the 2-acyl groups in 3-sn-phosphoglycerides. The chain is Basic phospholipase A2 DE-1 from Hemachatus haemachatus (Rinkhals).